The sequence spans 508 residues: UBX domain-containing protein 4 (508 aa).

Residues 1-200 form an interaction with UBQLN1 region; the sequence is MLWFQGAIPA…PAEDLNIRVE (200 aa). At 1-413 the chain is on the cytoplasmic side; the sequence is MLWFQGAIPA…VHSSSGDIWT (413 aa). 2 stretches are compositionally biased toward polar residues: residues 117–151 and 160–187; these read SETS…QSRN and TSDT…SGCS. Positions 117-196 are disordered; it reads SETSVANGSQ…SDQRPAEDLN (80 aa). A UBX domain is found at 315 to 393; that stretch reads ERSTVARIQF…ELAPSASVVL (79 aa). Residues 414–434 lie within the membrane without spanning it; sequence LLGTVLYPFLAIWRLISNFLF. Residues 435-508 lie on the Cytoplasmic side of the membrane; sequence SNPPPTQTSV…TWNGNSTQQM (74 aa). Residues 440 to 508 form a disordered region; that stretch reads TQTSVRVTSS…TWNGNSTQQM (69 aa). Residues 441-458 are compositionally biased toward polar residues; it reads QTSVRVTSSEPPNPASSS. A compositionally biased stretch (basic and acidic residues) spans 459 to 491; sequence KSEKREPVRKRVLEKRGDDFKKEGKIYRLRTQD. Residue T489 is modified to Phosphothreonine. Polar residues predominate over residues 498–508; that stretch reads NTWNGNSTQQM.

Directly interacts with VCP. Interacts with UBQLN1. Forms a complex with VCP and UBQLN1. In terms of tissue distribution, expressed in many tissues, including heart, brain, placenta, lung, liver, skeletal muscle, kidney and pancreas. Accumulates in Alzheimer disease-afflicted brains (at protein level).

It localises to the endoplasmic reticulum membrane. It is found in the nucleus envelope. Functionally, involved in endoplasmic reticulum-associated protein degradation (ERAD). Acts as a platform to recruit both UBQLN1 and VCP to the ER during ERAD. This chain is UBX domain-containing protein 4 (UBXN4), found in Homo sapiens (Human).